Here is a 467-residue protein sequence, read N- to C-terminus: H(+)/Cl(-) exchange transporter ClcA (467 aa).

Residues 1–30 lie on the Cytoplasmic side of the membrane; sequence MTKRERIVKSVLAHVPKDAINQFVSRGSTP. A helical transmembrane segment spans residues 31-67; sequence FSVLIMAAIVGTLAGFVGTYFELAVHFVSETRTEWLR. At 68–74 the chain is on the periplasmic side; sequence SEIGSVL. Residues 75–98 traverse the membrane as a helical segment; that stretch reads PLWLAAVLISALLAFIGYFLVHRF. Positions 104–108 match the Selectivity filter part_1 motif; the sequence is GSGIP. Ser-105 is a binding site for chloride. Residues 107–114 constitute an intramembrane region (helical); sequence IPEIEGAM. Residues 115 to 121 are Cytoplasmic-facing; it reads DNIRPVR. A run of 2 helical transmembrane segments spans residues 122–139 and 146–164; these read WWRV…ALGS and EGPT…TDIF. The Selectivity filter part_2 motif lies at 144–148; sequence GREGP. Residues 165 to 174 are Cytoplasmic-facing; sequence RVKDDDTRHS. 2 intramembrane regions (helical) span residues 175–187 and 191–199; these read LLAS…LAAA and PLAGIMFVV. Residues 200–212 are Cytoplasmic-facing; the sequence is EEMRPQFRYSLIS. A helical membrane pass occupies residues 213–230; the sequence is IRAVIISAIMANIVFRAI. Residues 231–250 are Periplasmic-facing; the sequence is NGQDAVITMPQYQSPALQTL. The helical transmembrane segment at 251-279 threads the bilayer; sequence WLFLLLGALFGVFGVIFNKLITVAQDSFV. Topologically, residues 280 to 285 are cytoplasmic; sequence AIHKND. The helical transmembrane segment at 286–307 threads the bilayer; the sequence is RKRYLITGSILGGVFGLLLLYV. Residues 308 to 327 are Periplasmic-facing; sequence PQLTGGGIALIPDVTTGNYS. The next 2 helical transmembrane spans lie at 328 to 347 and 353 to 374; these read ISIL…LCFG and GIFA…ASAD. Residues 353-357 carry the Selectivity filter part_3 motif; sequence GIFAP. 2 residues coordinate chloride: Ile-354 and Phe-355. Residues 375–384 are Periplasmic-facing; it reads VLLPTLDIEP. The helical intramembrane region spans 385-399; sequence GVFAIAGMGALFAAT. Positions 400 to 402 form an intramembrane region, note=Loop between two helices; that stretch reads VRA. An intramembrane region (helical) is located at residues 403–414; that stretch reads PITGILLVIEMT. An intramembrane region (note=Loop between two helices) is located at residues 415–419; the sequence is NNYYL. Residues 420–436 traverse the membrane as a helical segment; sequence ILPLIITCLGAVIVAQL. The Cytoplasmic portion of the chain corresponds to 437–467; that stretch reads LGGQPIYSQLLHRTLKNDKLRQQDLPENQAS. Tyr-443 provides a ligand contact to chloride.

It belongs to the chloride channel (TC 2.A.49) family. ClcA subfamily. As to quaternary structure, homodimer.

The protein localises to the cell inner membrane. It catalyses the reaction 2 chloride(in) + H(+)(out) = 2 chloride(out) + H(+)(in). Functionally, proton-coupled chloride transporter. Functions as antiport system and exchanges two chloride ions for 1 proton. Probably acts as an electrical shunt for an outwardly-directed proton pump that is linked to amino acid decarboxylation, as part of the extreme acid resistance (XAR) response. The sequence is that of H(+)/Cl(-) exchange transporter ClcA from Vibrio parahaemolyticus serotype O3:K6 (strain RIMD 2210633).